Reading from the N-terminus, the 190-residue chain is FUN14 domain-containing protein 2 (190 aa).

The segment covering 1 to 13 (METSTQRTGSHLA) has biased composition (polar residues). The interval 1–31 (METSTQRTGSHLAQTAAARHSASSRGEAARV) is disordered. At 1-81 (METSTQRTGS…GQESGPSAEK (81 aa)) the chain is on the cytoplasmic side. Phosphoserine occurs at positions 10 and 54. The chain crosses the membrane as a helical span at residues 82-102 (YSVATQLLIGGVTGWCTGFIF). Over 103–108 (QKVGKL) the chain is Mitochondrial intermembrane. Residues 109–129 (AATAVGGGFFLLQLANHTGYI) traverse the membrane as a helical segment. Topologically, residues 130 to 165 (KVDWQRVEKDMKKAKEQLKIRKSNQIPTEVKSKAEE) are cytoplasmic. S152 is subject to Phosphoserine. The chain crosses the membrane as a helical span at residues 166 to 186 (VVSFVKKNVLVTGGFFGGFLL). The Mitochondrial intermembrane segment spans residues 187–190 (GMAS).

The protein belongs to the FUN14 family.

It is found in the mitochondrion outer membrane. The protein localises to the nucleus. Its function is as follows. Binds directly and specifically 1,2-Diacyl-sn-glycero-3-phospho-(1'-myo-inositol-3',4',5'-bisphosphate) (PIP3) leading to the recruitment of PIP3 to mitochondria and may play a role in the regulation of the platelet activation via AKT/GSK3B/cGMP signaling pathways. May act as transcription factor that regulates SREBP1 (isoform SREBP-1C) expression in order to modulate triglyceride (TG) homeostasis in hepatocytes. In Bos taurus (Bovine), this protein is FUN14 domain-containing protein 2.